A 691-amino-acid chain; its full sequence is Homeobox protein NOBOX (691 aa).

The span at 94–103 (ELTRGQKAGE) shows a compositional bias: basic and acidic residues. The segment at 94 to 233 (ELTRGQKAGE…NSARATHNPV (140 aa)) is disordered. A compositionally biased stretch (polar residues) spans 216-228 (PTSSPGAPNSARA). The homeobox DNA-binding region spans 272 to 363 (RKKTRTLYRS…NRRAKWRKME (92 aa)). Disordered regions lie at residues 366 to 385 (NGKE…SQCS), 394 to 437 (VPME…AQRV), and 635 to 691 (QALG…SHVP). Residues 395 to 405 (PMEPKPDPFPQ) show a composition bias toward pro residues. Over residues 420-432 (TSDQTLAPTQPSE) the composition is skewed to polar residues. The span at 679-691 (EEARGDDKNSHVP) shows a compositional bias: basic and acidic residues.

As to expression, expressed in ovaries, testes and pancreas. Expressed within all stages of the adult female germline, from primordial follicles through to MII oocytes.

The protein resides in the nucleus. Its function is as follows. Transcription factor which may play a role in oogenesis. Binds preferentially to the DNA sequences 5'-TAATTG-3', 5'-TAGTTG-3' and 5'-TAATTA-3'. The polypeptide is Homeobox protein NOBOX (NOBOX) (Homo sapiens (Human)).